A 466-amino-acid polypeptide reads, in one-letter code: MNTNKVKIKAEYLTKKFELLPAKSSKNKAKSLIGSNSKNEKDFWALRNISFEIRDGECVGVIGLNGAGKSTLSNIISGQIAQTTGRVEINGDVSIIAASAGMQNNLSGRENIRLKALMVGLTNKEIKSKMDDIIEFSELGPFIDQPVKTYSSGMKAKLGFSIMVHQNPDIMIIDEGLSVGDKTFVDKSQKKMFEFRDEGKTILLVSHDMRTIKEWCDRVIWLNYGEVKAYGRPEEVIPEYEKFVQWFKKLPKKEQEKFKTDQRQAQLDYSVEELKAEIVSQNPSKSRRVQREVTEELKNKKDNHKLSLMSKVIVWLCLLAFIWITLVSLSNATLAESLRHPKTFFTERLFKSDTRNMTSTTKKEAVVKTSSSPKKKVSQAKKTTKVSSTQKNTSSSSSTSNQNTYIVQAGDSLSIIAENHGYSVEEIQQVNPGVDFSVIHPGQEINLPEPTTSANSTTEQSDGANQ.

The region spanning 27 to 249 (NKAKSLIGSN…YEKFVQWFKK (223 aa)) is the ABC transporter domain. 63-70 (GLNGAGKS) lines the ATP pocket. A unknown region spans residues 250 to 466 (LPKKEQEKFK…TTEQSDGANQ (217 aa)). 2 disordered regions span residues 356–403 (NMTS…SNQN) and 439–466 (IHPG…GANQ). Over residues 373–384 (PKKKVSQAKKTT) the composition is skewed to basic residues. Residues 385–403 (KVSSTQKNTSSSSSTSNQN) are compositionally biased toward low complexity. A LysM domain is found at 403 to 447 (NTYIVQAGDSLSIIAENHGYSVEEIQQVNPGVDFSVIHPGQEINL). Positions 449–466 (EPTTSANSTTEQSDGANQ) are enriched in polar residues.

It belongs to the ABC transporter superfamily. Teichoic acids exporter (TC 3.A.1.104.1) family. In terms of assembly, the complex is composed of two ATP-binding proteins (TagH) and two transmembrane proteins (TagG).

Its subcellular location is the cell membrane. The enzyme catalyses ATP + H2O + teichoic acidSide 1 = ADP + phosphate + teichoic acidSide 2.. Functionally, part of the ABC transporter complex TagGH involved in teichoic acids export. Responsible for energy coupling to the transport system. The protein is Teichoic acids export ATP-binding protein TagH of Lactococcus lactis subsp. lactis (strain IL1403) (Streptococcus lactis).